The following is a 553-amino-acid chain: Formate--tetrahydrofolate ligase (553 aa).

64–71 (TPAGEGKT) contributes to the ATP binding site.

Belongs to the formate--tetrahydrofolate ligase family.

The catalysed reaction is (6S)-5,6,7,8-tetrahydrofolate + formate + ATP = (6R)-10-formyltetrahydrofolate + ADP + phosphate. It participates in one-carbon metabolism; tetrahydrofolate interconversion. This is Formate--tetrahydrofolate ligase from Pseudothermotoga lettingae (strain ATCC BAA-301 / DSM 14385 / NBRC 107922 / TMO) (Thermotoga lettingae).